Here is a 129-residue protein sequence, read N- to C-terminus: Small ribosomal subunit protein uS9 (129 aa).

The protein belongs to the universal ribosomal protein uS9 family.

This chain is Small ribosomal subunit protein uS9, found in Chlorobium chlorochromatii (strain CaD3).